Here is a 563-residue protein sequence, read N- to C-terminus: Glutamate--tRNA ligase (563 aa).

A disordered region spans residues 61 to 94 (PEEQQKEVESLGGLEQHTKKEEKPKGLPELKNTE). Residues 76-94 (QHTKKEEKPKGLPELKNTE) are compositionally biased toward basic and acidic residues. A 'HIGH' region motif is present at residues 104-114 (PNPSGPLHIGH).

It belongs to the class-I aminoacyl-tRNA synthetase family. Glutamate--tRNA ligase type 2 subfamily.

It localises to the cytoplasm. It catalyses the reaction tRNA(Glu) + L-glutamate + ATP = L-glutamyl-tRNA(Glu) + AMP + diphosphate. Catalyzes the attachment of glutamate to tRNA(Glu) in a two-step reaction: glutamate is first activated by ATP to form Glu-AMP and then transferred to the acceptor end of tRNA(Glu). This is Glutamate--tRNA ligase from Methanosphaera stadtmanae (strain ATCC 43021 / DSM 3091 / JCM 11832 / MCB-3).